Consider the following 593-residue polypeptide: UvrABC system protein C (593 aa).

Positions 14–91 constitute a GIY-YIG domain; sequence DKPGCYLMKN…IKEHDPRYNV (78 aa). The region spanning 196–231 is the UVR domain; the sequence is EEMKQTLTEKMLQAAENMEFERAKEYRDQIKSIEAV.

The protein belongs to the UvrC family. As to quaternary structure, interacts with UvrB in an incision complex.

The protein resides in the cytoplasm. The UvrABC repair system catalyzes the recognition and processing of DNA lesions. UvrC both incises the 5' and 3' sides of the lesion. The N-terminal half is responsible for the 3' incision and the C-terminal half is responsible for the 5' incision. This chain is UvrABC system protein C, found in Brevibacillus brevis (strain 47 / JCM 6285 / NBRC 100599).